Consider the following 202-residue polypeptide: Cytochrome c oxidase assembly protein CtaG (202 aa).

Over 1 to 14 the chain is Cytoplasmic; that stretch reads MTSPANPSEVTRDR. The helical; Signal-anchor for type II membrane protein transmembrane segment at 15 to 37 threads the bilayer; sequence RNRGVAFVCAGVFVAMVGMSFAA. The Periplasmic segment spans residues 38–202; that stretch reads VPLYRLFCQV…GAAKTQKLGG (165 aa).

It belongs to the COX11/CtaG family.

Its subcellular location is the cell inner membrane. In terms of biological role, exerts its effect at some terminal stage of cytochrome c oxidase synthesis, probably by being involved in the insertion of the copper B into subunit I. The chain is Cytochrome c oxidase assembly protein CtaG from Chelativorans sp. (strain BNC1).